Here is a 491-residue protein sequence, read N- to C-terminus: MPPRLASVKIPYDWGRKGPFRFWRIFCQSRAVGWFLAAACGRAGRFRTQPAEWPTPDAVFSPLGLALFQDRHDGASNGTARLPQLGTVGQSPYTSAPPLSHTPNADFQPPYFPPPYQPIYPQSQDPYSHVNDPYSLNPLHAQPQPQHPGWPGQRQSQESGLLHTHRGLPHQLSGLDPRRDYRRHEDLLHGPHGLGSGLGDLPIHSLPHAIEDVPHVEDPGINIPDQTVIKKGPVSLSKSNSNAVSSIPINKDNLFGGVVNPNEVFCSVPGRLSLLSSTSKYKVTVAEVQRRLSPPECLNASLLGGVLRRAKSKNGGRSLREKLDKIGLNLPAGRRKAANVTLLTSLVEGEAVHLARDFGYVCETEFPAKAVAEFLNRQHSDPNEQVTRKNMLLATKQICKEFTDLLAQDRSPLGNSRPNPILEPGIQSCLTHFNLISHGFGSPAVCAAVTALQNYLTEALKAMDKMYLSNNPNSHTDNSAKSSDKEEKHRK.

The segment at 74–161 (GASNGTARLP…GQRQSQESGL (88 aa)) is disordered. The short motif at 111–116 (YFPPPY) is the PPxY motif element. Low complexity-rich tracts occupy residues 119 to 128 (IYPQSQDPYS) and 142 to 155 (QPQPQHPGWPGQRQ). Glycyl lysine isopeptide (Lys-Gly) (interchain with G-Cter in SUMO2) cross-links involve residues Lys231 and Lys238. Ser293 carries the post-translational modification Phosphoserine; by PKA. Positions 334 to 464 (RRKAANVTLL…YLTEALKAMD (131 aa)) are H-S-H (helix-span-helix), dimerization. Residues 468-481 (LSNNPNSHTDNSAK) show a composition bias toward polar residues. The interval 468–491 (LSNNPNSHTDNSAKSSDKEEKHRK) is disordered. Over residues 482–491 (SSDKEEKHRK) the composition is skewed to basic and acidic residues.

Belongs to the AP-2 family. Binds DNA as a dimer. Can form homodimers or heterodimers with other AP-2 family members. Interacts with WWOX. Interacts with CITED4. Interacts with UBE2I. Interacts with RALBP1 in a complex also containing EPN1 and NUMB during interphase and mitosis. Interacts with KCTD1; this interaction represses transcription activation. Interacts (via C-terminus) with CITED2 (via C-terminus); the interaction stimulates TFAP2A-transcriptional activation. Interacts (via N-terminus) with EP300 (via N-terminus); the interaction requires CITED2. Interacts with KCTD15; this interaction inhibits TFAP2A transcriptional activation.

It is found in the nucleus. Functionally, sequence-specific DNA-binding protein that interacts with inducible viral and cellular enhancer elements to regulate transcription of selected genes. AP-2 factors bind to the consensus sequence 5'-GCCNNNGGC-3' and activate genes involved in a large spectrum of important biological functions including proper eye, face, body wall, limb and neural tube development. They also suppress a number of genes including MCAM/MUC18, C/EBP alpha and MYC. AP-2-alpha is the only AP-2 protein required for early morphogenesis of the lens vesicle. Together with the CITED2 coactivator, stimulates the PITX2 P1 promoter transcription activation. Associates with chromatin to the PITX2 P1 promoter region. The sequence is that of Transcription factor AP-2-alpha (TFAP2A) from Ovis aries (Sheep).